The sequence spans 256 residues: Pimeloyl-[acyl-carrier protein] methyl ester esterase (256 aa).

The region spanning His15–Pro242 is the AB hydrolase-1 domain. Substrate contacts are provided by residues Trp22, Ser82–Leu83, and Phe143–Gln147. The Nucleophile role is filled by Ser82. Active-site residues include Asp207 and His235. His235 lines the substrate pocket.

The protein belongs to the AB hydrolase superfamily. Carboxylesterase BioH family. As to quaternary structure, monomer.

Its subcellular location is the cytoplasm. It catalyses the reaction 6-carboxyhexanoyl-[ACP] methyl ester + H2O = 6-carboxyhexanoyl-[ACP] + methanol + H(+). The protein operates within cofactor biosynthesis; biotin biosynthesis. Its function is as follows. The physiological role of BioH is to remove the methyl group introduced by BioC when the pimeloyl moiety is complete. It allows to synthesize pimeloyl-ACP via the fatty acid synthetic pathway through the hydrolysis of the ester bonds of pimeloyl-ACP esters. The protein is Pimeloyl-[acyl-carrier protein] methyl ester esterase of Shigella boydii serotype 18 (strain CDC 3083-94 / BS512).